The primary structure comprises 355 residues: tRNA uridine(34) hydroxylase (355 aa).

The 95-residue stretch at 146-240 (DDPDTVFVDM…YARQAKAQGL (95 aa)) folds into the Rhodanese domain. Residue Cys-200 is the Cysteine persulfide intermediate of the active site.

Belongs to the TrhO family.

The catalysed reaction is uridine(34) in tRNA + AH2 + O2 = 5-hydroxyuridine(34) in tRNA + A + H2O. Functionally, catalyzes oxygen-dependent 5-hydroxyuridine (ho5U) modification at position 34 in tRNAs. This is tRNA uridine(34) hydroxylase from Pectobacterium carotovorum subsp. carotovorum (strain PC1).